Reading from the N-terminus, the 424-residue chain is UDP-N-acetylglucosamine 1-carboxyvinyltransferase (424 aa).

A phosphoenolpyruvate-binding site is contributed by 22–23; that stretch reads KN. Arg96 provides a ligand contact to UDP-N-acetyl-alpha-D-glucosamine. Catalysis depends on Cys120, which acts as the Proton donor. Position 120 is a 2-(S-cysteinyl)pyruvic acid O-phosphothioketal (Cys120). UDP-N-acetyl-alpha-D-glucosamine contacts are provided by residues 125–129, Asp312, and Ile334; that span reads RPVDQ.

Belongs to the EPSP synthase family. MurA subfamily.

The protein resides in the cytoplasm. It catalyses the reaction phosphoenolpyruvate + UDP-N-acetyl-alpha-D-glucosamine = UDP-N-acetyl-3-O-(1-carboxyvinyl)-alpha-D-glucosamine + phosphate. It participates in cell wall biogenesis; peptidoglycan biosynthesis. In terms of biological role, cell wall formation. Adds enolpyruvyl to UDP-N-acetylglucosamine. In Polynucleobacter necessarius subsp. necessarius (strain STIR1), this protein is UDP-N-acetylglucosamine 1-carboxyvinyltransferase.